A 92-amino-acid chain; its full sequence is MVRSVWKGPFVEGSLLKKADVARSSGRHDVIKIWSRRSTILPQFVGLVFGVYNGQKHVPVSVNEEMVGHKFGEFSPTRTFHGHSGDKKAKKA.

The protein belongs to the universal ribosomal protein uS19 family.

Protein S19 forms a complex with S13 that binds strongly to the 16S ribosomal RNA. The chain is Small ribosomal subunit protein uS19 from Rhodopseudomonas palustris (strain BisB18).